Reading from the N-terminus, the 371-residue chain is Carnitine monooxygenase oxygenase subunit (371 aa).

One can recognise a Rieske domain in the interval 44–152 (WICVAHSSEL…VEEYAGFLFI (109 aa)). Residues cysteine 86, histidine 88, cysteine 106, and histidine 109 each contribute to the [2Fe-2S] cluster site. Fe cation-binding residues include histidine 208, histidine 213, and aspartate 323.

The protein belongs to the bacterial ring-hydroxylating dioxygenase alpha subunit family. CntA subfamily. As to quaternary structure, composed of an oxygenase subunit (cntA) and a reductase subunit (cntB). The cofactor is [2Fe-2S] cluster. It depends on Fe cation as a cofactor.

It catalyses the reaction (R)-carnitine + NADH + O2 + H(+) = (3R)-3-hydroxy-4-oxobutanoate + trimethylamine + NAD(+) + H2O. The catalysed reaction is (R)-carnitine + NADPH + O2 + H(+) = (3R)-3-hydroxy-4-oxobutanoate + trimethylamine + NADP(+) + H2O. It functions in the pathway amine and polyamine metabolism; carnitine metabolism. Functionally, converts carnitine to trimethylamine and malic semialdehyde. The polypeptide is Carnitine monooxygenase oxygenase subunit (Acinetobacter baumannii (strain ATCC 19606 / DSM 30007 / JCM 6841 / CCUG 19606 / CIP 70.34 / NBRC 109757 / NCIMB 12457 / NCTC 12156 / 81)).